Reading from the N-terminus, the 475-residue chain is Luvungin A synthase CYP716AC1 (475 aa).

A helical transmembrane segment spans residues 3-23 (FIILSLLLLSLALYSLYYVII). Position 423 (C423) interacts with heme.

This sequence belongs to the cytochrome P450 family. The cofactor is heme. As to expression, expressed in flowers, maturing fruits and in juice vesicles.

The protein resides in the membrane. The enzyme catalyses (21S)-21-acetoxyl-apo-melianone + reduced [NADPH--hemoprotein reductase] + O2 = luvungin A + oxidized [NADPH--hemoprotein reductase] + H2O + H(+). It functions in the pathway secondary metabolite biosynthesis; terpenoid biosynthesis. Functionally, monooxygenase involved in the biosynthesis of limonoids triterpene natural products such as limonin, a compound with insecticidal activity responsible for the bitter taste in citrus. Catalyzes the conversion of (21S)-21-acetoxyl-apo-melianone to luvungin A. The protein is Luvungin A synthase CYP716AC1 of Citrus sinensis (Sweet orange).